The primary structure comprises 122 residues: Large ribosomal subunit protein uL14 (122 aa).

This sequence belongs to the universal ribosomal protein uL14 family. In terms of assembly, part of the 50S ribosomal subunit. Forms a cluster with proteins L3 and L19. In the 70S ribosome, L14 and L19 interact and together make contacts with the 16S rRNA in bridges B5 and B8.

Its function is as follows. Binds to 23S rRNA. Forms part of two intersubunit bridges in the 70S ribosome. The polypeptide is Large ribosomal subunit protein uL14 (Geotalea daltonii (strain DSM 22248 / JCM 15807 / FRC-32) (Geobacter daltonii)).